A 227-amino-acid chain; its full sequence is Ubiquitin domain-containing protein 1 (227 aa).

A disordered region spans residues 1–35; sequence MGNCVGRQRRERPAAPGHPRKRAGRNEPLKKERLK. Residues 24–35 are compositionally biased toward basic and acidic residues; that stretch reads GRNEPLKKERLK. One can recognise a Ubiquitin-like domain in the interval 149-224; it reads FPLKVRLSTG…IQVIINQPPP (76 aa).

As to quaternary structure, interacts with UBTD1.

Its function is as follows. May be involved in the regulation of cellular senescence through a positive feedback loop with TP53. Is a TP53 downstream target gene that increases the stability of TP53 protein by promoting the ubiquitination and degradation of MDM2. In Homo sapiens (Human), this protein is Ubiquitin domain-containing protein 1 (UBTD1).